The following is a 371-amino-acid chain: UPF0284 protein tll2306 (371 aa).

Belongs to the UPF0284 family.

The protein is UPF0284 protein tll2306 of Thermosynechococcus vestitus (strain NIES-2133 / IAM M-273 / BP-1).